Reading from the N-terminus, the 363-residue chain is tRNA N6-adenosine threonylcarbamoyltransferase (363 aa).

Fe cation contacts are provided by His-121 and His-125. Substrate-binding positions include 143 to 147 (LASGG), Asp-176, Gly-189, and Asn-287. Asp-315 contacts Fe cation.

The protein belongs to the KAE1 / TsaD family. Fe(2+) serves as cofactor.

The protein resides in the cytoplasm. The catalysed reaction is L-threonylcarbamoyladenylate + adenosine(37) in tRNA = N(6)-L-threonylcarbamoyladenosine(37) in tRNA + AMP + H(+). Its function is as follows. Required for the formation of a threonylcarbamoyl group on adenosine at position 37 (t(6)A37) in tRNAs that read codons beginning with adenine. Is involved in the transfer of the threonylcarbamoyl moiety of threonylcarbamoyl-AMP (TC-AMP) to the N6 group of A37, together with TsaE and TsaB. TsaD likely plays a direct catalytic role in this reaction. The sequence is that of tRNA N6-adenosine threonylcarbamoyltransferase from Rhodopseudomonas palustris (strain BisA53).